The chain runs to 271 residues: Ribose-phosphate pyrophosphokinase 2 (271 aa).

Residues 34–36 (DGE) and 82–83 (RQ) contribute to the ATP site. Mg(2+) contacts are provided by H115 and D150. The active site involves K173. D-ribose 5-phosphate contacts are provided by residues R175, D199, and 203–207 (STGGT).

The protein belongs to the ribose-phosphate pyrophosphokinase family. Class III (archaeal) subfamily. The cofactor is Mg(2+).

Its subcellular location is the cytoplasm. The catalysed reaction is D-ribose 5-phosphate + ATP = 5-phospho-alpha-D-ribose 1-diphosphate + AMP + H(+). It functions in the pathway metabolic intermediate biosynthesis; 5-phospho-alpha-D-ribose 1-diphosphate biosynthesis; 5-phospho-alpha-D-ribose 1-diphosphate from D-ribose 5-phosphate (route I): step 1/1. In terms of biological role, involved in the biosynthesis of the central metabolite phospho-alpha-D-ribosyl-1-pyrophosphate (PRPP) via the transfer of pyrophosphoryl group from ATP to 1-hydroxyl of ribose-5-phosphate (Rib-5-P). The sequence is that of Ribose-phosphate pyrophosphokinase 2 from Archaeoglobus fulgidus (strain ATCC 49558 / DSM 4304 / JCM 9628 / NBRC 100126 / VC-16).